We begin with the raw amino-acid sequence, 428 residues long: Glutamyl-tRNA reductase (428 aa).

Residues 50–53 (TCNR), serine 110, 115–117 (ETQ), and glutamine 121 each bind substrate. Cysteine 51 serves as the catalytic Nucleophile. 190 to 195 (GAGEMG) is an NADP(+) binding site.

Belongs to the glutamyl-tRNA reductase family. Homodimer.

The enzyme catalyses (S)-4-amino-5-oxopentanoate + tRNA(Glu) + NADP(+) = L-glutamyl-tRNA(Glu) + NADPH + H(+). It functions in the pathway porphyrin-containing compound metabolism; protoporphyrin-IX biosynthesis; 5-aminolevulinate from L-glutamyl-tRNA(Glu): step 1/2. Its function is as follows. Catalyzes the NADPH-dependent reduction of glutamyl-tRNA(Glu) to glutamate 1-semialdehyde (GSA). The chain is Glutamyl-tRNA reductase from Campylobacter curvus (strain 525.92).